The primary structure comprises 281 residues: NAD kinase (281 aa).

Catalysis depends on Asp-61, which acts as the Proton acceptor. Residues 61-62, 134-135, Arg-145, Asp-164, 175-180, and Gln-234 each bind NAD(+); these read DG, ND, and TAYSLS.

Belongs to the NAD kinase family. The cofactor is a divalent metal cation.

It localises to the cytoplasm. It carries out the reaction NAD(+) + ATP = ADP + NADP(+) + H(+). Its function is as follows. Involved in the regulation of the intracellular balance of NAD and NADP, and is a key enzyme in the biosynthesis of NADP. Catalyzes specifically the phosphorylation on 2'-hydroxyl of the adenosine moiety of NAD to yield NADP. This Clostridium botulinum (strain Kyoto / Type A2) protein is NAD kinase.